We begin with the raw amino-acid sequence, 721 residues long: Catalase-peroxidase (721 aa).

Residues 95–223 constitute a cross-link (tryptophyl-tyrosyl-methioninium (Trp-Tyr) (with M-249)); sequence WHSAGSYRLF…LGAVHMGLIY (129 aa). The Proton acceptor role is filled by histidine 96. The tryptophyl-tyrosyl-methioninium (Tyr-Met) (with W-95) cross-link spans 223–249; sequence YVNPQGRDGKPDPLKSAHDVRVTFKRM. Residue histidine 264 participates in heme b binding.

It belongs to the peroxidase family. Peroxidase/catalase subfamily. Homodimer or homotetramer. Requires heme b as cofactor. Formation of the three residue Trp-Tyr-Met cross-link is important for the catalase, but not the peroxidase activity of the enzyme.

The catalysed reaction is H2O2 + AH2 = A + 2 H2O. The enzyme catalyses 2 H2O2 = O2 + 2 H2O. Its function is as follows. Bifunctional enzyme with both catalase and broad-spectrum peroxidase activity. This chain is Catalase-peroxidase, found in Parvibaculum lavamentivorans (strain DS-1 / DSM 13023 / NCIMB 13966).